Here is a 397-residue protein sequence, read N- to C-terminus: 1-deoxy-D-xylulose 5-phosphate reductoisomerase (397 aa).

8 residues coordinate NADPH: T12, G13, S14, I15, G38, K39, N40, and N126. Residue K127 coordinates 1-deoxy-D-xylulose 5-phosphate. E128 is a binding site for NADPH. D152 contributes to the Mn(2+) binding site. S153, E154, S188, and H211 together coordinate 1-deoxy-D-xylulose 5-phosphate. E154 is a Mn(2+) binding site. G217 contributes to the NADPH binding site. Positions 224, 229, 230, and 233 each coordinate 1-deoxy-D-xylulose 5-phosphate. Mn(2+) is bound at residue E233.

It belongs to the DXR family. Requires Mg(2+) as cofactor. Mn(2+) is required as a cofactor.

The enzyme catalyses 2-C-methyl-D-erythritol 4-phosphate + NADP(+) = 1-deoxy-D-xylulose 5-phosphate + NADPH + H(+). It functions in the pathway isoprenoid biosynthesis; isopentenyl diphosphate biosynthesis via DXP pathway; isopentenyl diphosphate from 1-deoxy-D-xylulose 5-phosphate: step 1/6. Its function is as follows. Catalyzes the NADPH-dependent rearrangement and reduction of 1-deoxy-D-xylulose-5-phosphate (DXP) to 2-C-methyl-D-erythritol 4-phosphate (MEP). The protein is 1-deoxy-D-xylulose 5-phosphate reductoisomerase of Haemophilus influenzae (strain PittEE).